A 334-amino-acid chain; its full sequence is Probable type II restriction enzyme HindVP (334 aa).

The catalysed reaction is Endonucleolytic cleavage of DNA to give specific double-stranded fragments with terminal 5'-phosphates.. A P subtype restriction enzyme that recognizes the double-stranded sequence 5'-GRCGYC-3'; the cleavage site is unknown. This chain is Probable type II restriction enzyme HindVP (hindVRP), found in Haemophilus influenzae (strain ATCC 51907 / DSM 11121 / KW20 / Rd).